We begin with the raw amino-acid sequence, 886 residues long: General transcription factor 3C polypeptide 3 (886 aa).

The interval 1-121 (MSGFSPELID…TPEQPTAGDV (121 aa)) is disordered. Serine 2 is modified (N-acetylserine). Over residues 12–44 (LEGKISFEEFERRREERKTREKKSLQEKGKLSA) the composition is skewed to basic and acidic residues. Serine 43 is modified (phosphoserine). Positions 53–63 (VPSSSGINSTK) are enriched in polar residues. Acidic residues predominate over residues 92–113 (ENEDDEEEEEEEEEEEEEEETP). TPR repeat units follow at residues 149–182 (LRGL…APLA), 183–216 (YEPF…NPSD), 217–250 (TEEW…EPTN), 252–284 (RYLW…LSPS), 290–323 (MQLA…HQGL), 326–361 (MEDV…EKKT), 421–454 (GDLY…ERYN), 456–489 (AVVW…APLH), 491–523 (DARI…DTLA), 733–766 (HALC…HPDE), and 811–844 (QESF…PPLV). Position 282 is a phosphoserine (serine 282).

Part of the TFIIIC subcomplex TFIIIC2, consisting of six subunits, GTF3C1, GTF3C2, GTF3C3, GTF3C4, GTF3C5 and GTF3C6. Interacts with BRF1 and TBP.

The protein localises to the nucleus. In terms of biological role, involved in RNA polymerase III-mediated transcription. Integral, tightly associated component of the DNA-binding TFIIIC2 subcomplex that directly binds tRNA and virus-associated RNA promoters. The protein is General transcription factor 3C polypeptide 3 (GTF3C3) of Homo sapiens (Human).